The following is a 336-amino-acid chain: Vacuolar protein sorting-associated protein 26B (336 aa).

Phosphoserine is present on residues S302, S304, and S319.

It belongs to the VPS26 family. In terms of assembly, component of the heterotrimeric retromer cargo-selective complex (CSC), also described as vacuolar protein sorting subcomplex (VPS), formed by VPS26 (VPS26A or VPS26B), VPS29 and VPS35. The CSC has a highly elongated structure with VPS26 and VPS29 binding independently at opposite distal ends of VPS35 as central platform. The CSC is believed to associate with variable sorting nexins to form functionally distinct retromer complex variants. The originally described SNX-BAR retromer is a pentamer containing the CSC and a heterodimeric membrane-deforming subcomplex formed between SNX1 or SNX2 and SNX5 or SNX6 (also called SNX-BAR subcomplex); the respective CSC and SNX-BAR subcomplexes associate with low affinity. The CSC associates with SNX3 to form a SNX3-retromer complex. The CSC associates with SNX27, the WASH complex and the SNX-BAR subcomplex to form the SNX27-retromer complex. Interacts with VPS29, VPS35, TBC1D5, GOLPH3, SNX27.

The protein resides in the cytoplasm. Its subcellular location is the membrane. It localises to the early endosome. It is found in the late endosome. Functionally, acts as a component of the retromer cargo-selective complex (CSC). The CSC is believed to be the core functional component of retromer or respective retromer complex variants acting to prevent missorting of selected transmembrane cargo proteins into the lysosomal degradation pathway. The recruitment of the CSC to the endosomal membrane involves RAB7A and SNX3. The SNX-BAR retromer mediates retrograde transport of cargo proteins from endosomes to the trans-Golgi network (TGN) and is involved in endosome-to-plasma membrane transport for cargo protein recycling. The SNX3-retromer mediates the retrograde transport of WLS distinct from the SNX-BAR retromer pathway. The SNX27-retromer is believed to be involved in endosome-to-plasma membrane trafficking and recycling of a broad spectrum of cargo proteins. The CSC seems to act as recruitment hub for other proteins, such as the WASH complex and TBC1D5. May be involved in retrograde transport of SORT1 but not of IGF2R. Acts redundantly with VSP26A in SNX-27 mediated endocytic recycling of SLC2A1/GLUT1. The chain is Vacuolar protein sorting-associated protein 26B (VPS26B) from Pongo abelii (Sumatran orangutan).